Here is a 961-residue protein sequence, read N- to C-terminus: Transcription factor MYB3R-4 (961 aa).

The segment at Met1–Thr33 is disordered. HTH myb-type domains are found at residues Ala24–Leu75, Asn76–Ile131, and Asn132–Leu182. 3 consecutive DNA-binding regions (H-T-H motif) follow at residues Trp52–Leu75, Trp104–Leu127, and Trp155–Val178. Disordered regions lie at residues Gly390 to Ser457 and Arg534 to Gly555. Composition is skewed to polar residues over residues His391–Asn405 and Ser416–Pro430. Residues Thr431–Ser444 show a composition bias toward low complexity. Over residues Arg534–Met554 the composition is skewed to basic and acidic residues. The Nuclear localization signal signature appears at Gly612–Ala619. The disordered stretch occupies residues Asn756–Arg781. Residues Thr764–Arg781 are compositionally biased toward polar residues.

As to quaternary structure, component of a DREAM-like complex which modulates a variety of developmentally regulated genes and of the mitotic genes in proliferating and differentiated cells. Associates with CDKA-1, RBR1 and E2FB, but not with E2FC, in proliferating cells, at early stages of leaves development. In terms of tissue distribution, expressed in roots, cotyledons and leaves, especially in vascular tissues, and in flowers.

It localises to the nucleus. Its function is as follows. Transcription factor that binds 5'-AACGG-3' motifs in gene promoters. Involved in the regulation of cytokinesis, probably via the activation of several G2/M phase-specific genes transcription (e.g. KNOLLE). Required for the maintenance of diploidy. Functionally, involved in transcription regulation during induced endoreduplication at the powdery mildew (e.g. G.orontii) infection site, thus promoting G.orontii growth and reproduction. The protein is Transcription factor MYB3R-4 of Arabidopsis thaliana (Mouse-ear cress).